The primary structure comprises 276 residues: MPNAPLRTAIEALWERRATLSARTEGEDRDVVEKVLSALDAGTLRVAEPFADGWTVHEWLKKAVLLSFRLNDSRVMERGCGGEPAFDKVPLKFDGWDQFRFAEAGFRAVPGAIVRRSAFIAPNVVLMPSFVNVGARVDSGTMIDTWATVGSCAQIGKNCHISGGAGIGGVLEPLQAAPVIIEDDCFIGARSEVAEGVIVEKGSVLSMGVFLGASTKIVDRATGEIFMGRVPAYSVVVPGTLPPKEPGMPSLACAVIVKRVDERTRSKTSINDLLRD.

Residues Arg-107 and Asp-144 each coordinate substrate.

It belongs to the transferase hexapeptide repeat family. As to quaternary structure, homotrimer.

It localises to the cytoplasm. The catalysed reaction is (S)-2,3,4,5-tetrahydrodipicolinate + succinyl-CoA + H2O = (S)-2-succinylamino-6-oxoheptanedioate + CoA. The protein operates within amino-acid biosynthesis; L-lysine biosynthesis via DAP pathway; LL-2,6-diaminopimelate from (S)-tetrahydrodipicolinate (succinylase route): step 1/3. This chain is 2,3,4,5-tetrahydropyridine-2,6-dicarboxylate N-succinyltransferase, found in Gluconobacter oxydans (strain 621H) (Gluconobacter suboxydans).